The primary structure comprises 586 residues: uncharacterized protein (586 aa).

Residues 1–115 (MRVLVAETGR…NTEKLAGRDD (115 aa)) are disordered. The segment covering 8 to 20 (TGREDNVSVHSRE) has biased composition (basic and acidic residues). The span at 21–31 (VSVNGSDSGTG) shows a compositional bias: polar residues. A compositionally biased stretch (basic and acidic residues) spans 35–44 (YKLETDDEHP). Positions 76–107 (TGMNTEYNDDNSSLVNTPRDSTTYAETNSPNT) are enriched in polar residues. WD repeat units lie at residues 184 to 223 (QFKE…ERRE), 253 to 291 (GHNA…SLAV), 293 to 333 (RHNE…ILHW), 335 to 374 (ELEY…YVSS), 387 to 430 (CRVT…LVLK), and 432 to 474 (SDAH…LINA).

It is found in the cytoplasm. It localises to the nucleus. This is an uncharacterized protein from Schizosaccharomyces pombe (strain 972 / ATCC 24843) (Fission yeast).